Reading from the N-terminus, the 615-residue chain is Envelope glycoprotein (615 aa).

Positions 1 to 84 are cleaved as a signal peptide; it reads MPKRRAGFRK…VQNGAAAAFW (84 aa). Over 85-378 the chain is Extracellular; it reads AYIPDPPMIQ…INTALSRPKR (294 aa). Residues asparagine 108, asparagine 127, asparagine 178, asparagine 219, asparagine 275, and asparagine 319 are each glycosylated (N-linked (GlcNAc...) asparagine; by host). The chain crosses the membrane as a helical span at residues 379–402; the sequence is GLSLIILGIVSLITLIATAVTACV. Residues 403–615 are Cytoplasmic-facing; the sequence is SLAQSIQAAH…KERGAAGDDP (213 aa). 2 coiled-coil regions span residues 411–461 and 495–531; these read AHTV…FRMK and IWFN…TVDN. Residues 590–593 are required for cell transformation; that stretch reads YRTM.

In terms of assembly, interacts with sheep HYAL2 receptor.

Its subcellular location is the virion membrane. Functionally, the envelope proteins induce cell transformation leading to ovine pulmonary adenocarcinoma (OPA), a contagious lung cancer of sheep and goat. They bind to the HYAL2 receptor for cell entry. Env proteins probably do not act as oncogenes by themselves, but may rather liberate an oncogenic factor that would normally be negatively regulated. One mechanism of transformation seems to involve activation of the phosphoinositide-3-OH kinase (PI3K)/Akt pathway but does not involve the virus receptor HYAL2, and the other seems to involve Env binding to HYAL2, HYAL2 degradation, and activation of the MST1R receptor tyrosine kinase, which is normally suppressed by HYAL2. This is Envelope glycoprotein (env) from Ovis aries (Sheep).